The primary structure comprises 130 residues: Holo-[acyl-carrier-protein] synthase (130 aa).

Residues Asp-8 and Glu-62 each coordinate Mg(2+).

The protein belongs to the P-Pant transferase superfamily. AcpS family. Requires Mg(2+) as cofactor.

The protein localises to the cytoplasm. It catalyses the reaction apo-[ACP] + CoA = holo-[ACP] + adenosine 3',5'-bisphosphate + H(+). Transfers the 4'-phosphopantetheine moiety from coenzyme A to a Ser of acyl-carrier-protein. The polypeptide is Holo-[acyl-carrier-protein] synthase (Variovorax paradoxus (strain S110)).